A 355-amino-acid chain; its full sequence is Probable zinc transporter 12 (355 aa).

The signal sequence occupies residues 1 to 25; the sequence is MSRFRKTLVSAFVLCLVIFPLLVSA. Topologically, residues 26–50 are extracellular; it reads AEEENQCGGSKGGSAAEKASALKYK. The chain crosses the membrane as a helical span at residues 51–71; sequence IIAFFSILIAGVFGVCLPIFG. The Cytoplasmic segment spans residues 72-77; that stretch reads LKTESN. The chain crosses the membrane as a helical span at residues 78-98; sequence FFMYVKAFAAGVILATGFVHI. Topologically, residues 99 to 116 are extracellular; sequence LPDATESLTSSCLGEEPP. Residues 117–137 form a helical membrane-spanning segment; the sequence is WGDFPMTGLVAMAASILTMLI. Topologically, residues 138–200 are cytoplasmic; it reads ESFASGYLNR…DDDHIDMRKK (63 aa). A disordered region spans residues 156 to 183; it reads TLPVSTGGEEEHAHTGSAHTHASQGHSH. The chain crosses the membrane as a helical span at residues 201-221; that stretch reads IVTQILELGIVVHSVIIGISL. Residues 222-231 lie on the Extracellular side of the membrane; the sequence is GASPSVSTIK. A helical membrane pass occupies residues 232 to 252; the sequence is PLIAAITFHQLFEGFGLGGCI. Residues 253–261 lie on the Cytoplasmic side of the membrane; the sequence is SEAKFRVKK. A helical membrane pass occupies residues 262–282; that stretch reads IWVMLMFFALTAPIGIGIGIG. The Extracellular portion of the chain corresponds to 283–302; that stretch reads VAEIYNENSPMALKVSGFLN. The helical transmembrane segment at 303 to 323 threads the bilayer; sequence ATASGILIYMALVDLVAPLFM. At 324-334 the chain is on the cytoplasmic side; sequence NQKTQSSMKIQ. Residues 335–355 form a helical membrane-spanning segment; the sequence is VACSVSLVVGAGLMSLLAIWA.

This sequence belongs to the ZIP transporter (TC 2.A.5) family.

Its subcellular location is the cell membrane. Its function is as follows. Zinc transporter involved in zinc uptake in roots. Targeted by BZIP23 transcription factor in response to zinc-deficient conditions. The sequence is that of Probable zinc transporter 12 (ZIP12) from Arabidopsis thaliana (Mouse-ear cress).